The sequence spans 375 residues: WAT1-related protein At1g70260 (375 aa).

10 helical membrane-spanning segments follow: residues 10-30, 41-61, 72-92, 106-126, 143-163, 191-211, 225-245, 259-278, 289-309, and 312-332; these read LVPFVAMAIMEACTIALTIMA, FVFVVYTNAFGSILLLPFSFL, IFSWPLLVRVFFLGFTGIFMF, IVVCAMGLQIPSFSFLLSIIL, MGTIVSLSGAFVEELYKGPFI, WFLGCIFLAVAVFSVSLFNVV, VASFYSIVGTIQCLLFSLFME, LYLIIATGTFGSVIRTSVHV, VPLFKPFGIFWATLFGTSFFV, and LHYGSVLGAAIAGVGYFTVSW. The EamA domain maps to 25–134; sequence ALTIMAKTAL…ILGRSKLDWR (110 aa). Positions 337 to 356 are disordered; sequence ESEEKQSSNEERKSIKTIHH.

It belongs to the drug/metabolite transporter (DMT) superfamily. Plant drug/metabolite exporter (P-DME) (TC 2.A.7.4) family.

It is found in the membrane. In Arabidopsis thaliana (Mouse-ear cress), this protein is WAT1-related protein At1g70260.